The sequence spans 345 residues: Phenylalanine--tRNA ligase alpha subunit (345 aa).

Residue glutamate 272 coordinates Mg(2+).

Belongs to the class-II aminoacyl-tRNA synthetase family. Phe-tRNA synthetase alpha subunit type 1 subfamily. Tetramer of two alpha and two beta subunits. Mg(2+) serves as cofactor.

The protein resides in the cytoplasm. The catalysed reaction is tRNA(Phe) + L-phenylalanine + ATP = L-phenylalanyl-tRNA(Phe) + AMP + diphosphate + H(+). The polypeptide is Phenylalanine--tRNA ligase alpha subunit (Prochlorococcus marinus (strain MIT 9312)).